A 317-amino-acid chain; its full sequence is Aspartate carbamoyltransferase catalytic subunit (317 aa).

Carbamoyl phosphate is bound by residues Arg66 and Thr67. Lys94 is an L-aspartate binding site. 3 residues coordinate carbamoyl phosphate: Arg116, His144, and Gln147. L-aspartate is bound by residues Arg177 and Arg231. Positions 272 and 273 each coordinate carbamoyl phosphate.

Belongs to the aspartate/ornithine carbamoyltransferase superfamily. ATCase family. In terms of assembly, heterododecamer (2C3:3R2) of six catalytic PyrB chains organized as two trimers (C3), and six regulatory PyrI chains organized as three dimers (R2).

The enzyme catalyses carbamoyl phosphate + L-aspartate = N-carbamoyl-L-aspartate + phosphate + H(+). Its pathway is pyrimidine metabolism; UMP biosynthesis via de novo pathway; (S)-dihydroorotate from bicarbonate: step 2/3. In terms of biological role, catalyzes the condensation of carbamoyl phosphate and aspartate to form carbamoyl aspartate and inorganic phosphate, the committed step in the de novo pyrimidine nucleotide biosynthesis pathway. This Rhodopseudomonas palustris (strain BisB18) protein is Aspartate carbamoyltransferase catalytic subunit.